The chain runs to 115 residues: Putative UPF0320 protein YKL225W (115 aa).

The protein belongs to the UPF0320 family.

This Saccharomyces cerevisiae (strain ATCC 204508 / S288c) (Baker's yeast) protein is Putative UPF0320 protein YKL225W.